The primary structure comprises 150 residues: UPF0336 protein SCO4636 (150 aa).

Residues Val8–Ala116 form the MaoC-like domain.

Belongs to the UPF0336 family.

This is UPF0336 protein SCO4636 from Streptomyces coelicolor (strain ATCC BAA-471 / A3(2) / M145).